Here is a 344-residue protein sequence, read N- to C-terminus: Melanocyte-stimulating hormone receptor (344 aa).

The Extracellular segment spans residues 1–37 (MPMQGAQRKLLGSLNSTPTATSNLGLAANHTGAPCLE). An N-linked (GlcNAc...) asparagine glycan is attached at Asn29. The helical transmembrane segment at 38-63 (VSIPDGLFLSLGLVSLVENVLVVAAI) threads the bilayer. The Cytoplasmic portion of the chain corresponds to 64-72 (AKNRNLHSS). A helical transmembrane segment spans residues 73–93 (MYCFICCLALSDLLVSGSNML). The Extracellular portion of the chain corresponds to 94 to 118 (ETAIILLLEAGTLATRASVVQQLHN). Residues 119–140 (TIDVLTCSSMLCSLCFLGAIAV) form a helical membrane-spanning segment. The Cytoplasmic portion of the chain corresponds to 141-163 (DRYISIFYALRYHSIMTLPRAQR). Residues 164-183 (AIAAIWVTSVLSSTLFITYY) traverse the membrane as a helical segment. Over 184–191 (DHAAVLLC) the chain is Extracellular. Residues 192-211 (LVVFFLAMLVLMAVLYVHML) traverse the membrane as a helical segment. The Cytoplasmic portion of the chain corresponds to 212 to 240 (ARACQHAQGIIRLHNRQLPAHKGFGLRGA). The helical transmembrane segment at 241 to 266 (ATLTILLGIFFLCWGPFFLHLTLVVF) threads the bilayer. The Extracellular portion of the chain corresponds to 267 to 279 (CPQHLTCNCIFKN). Residues 280 to 300 (FKVFLTLIICNTIIDPLIYAF) traverse the membrane as a helical segment. Topologically, residues 301-344 (RSQELRRTLKEVLLCSWWPGCGAEGGGDSVWPGSCVTLRGPLPP) are cytoplasmic. Residue Cys315 is the site of S-palmitoyl cysteine attachment.

It belongs to the G-protein coupled receptor 1 family. In terms of assembly, interacts with MGRN1, but does not undergo MGRN1-mediated ubiquitination; this interaction competes with GNAS-binding and thus inhibits agonist-induced cAMP production. Interacts with OPN3; the interaction results in a decrease in MC1R-mediated cAMP signaling and ultimately a decrease in melanin production in melanocytes.

The protein localises to the cell membrane. Its function is as follows. Receptor for MSH (alpha, beta and gamma) and ACTH. The activity of this receptor is mediated by G proteins which activate adenylate cyclase. Mediates melanogenesis, the production of eumelanin (black/brown) and phaeomelanin (red/yellow), via regulation of cAMP signaling in melanocytes. The sequence is that of Melanocyte-stimulating hormone receptor (MC1R) from Mico argentatus (Silvery marmoset).